A 105-amino-acid polypeptide reads, in one-letter code: Multidrug resistance protein EbrA (105 aa).

The next 4 membrane-spanning stretches (helical) occupy residues 2–22 (LIGYIFLTIAICSESIGAAML), 35–55 (ALVVIGYSLAFYMLSLTLNHI), 57–77 (LSLSYATWSGAGTVLTTVIGV), and 84–104 (LNAKGLIGILLLLSGVVLLNW).

The protein belongs to the drug/metabolite transporter (DMT) superfamily. Small multidrug resistance (SMR) (TC 2.A.7.1) family. EbrA/EbrB subfamily. The efflux pump is composed of EbrA and EbrB.

It is found in the cell membrane. Its function is as follows. Part of a multidrug efflux pump. Confers resistance to cationic lipophilic dyes such as ethidium bromide, acriflavine, pyronine Y and safranin O. The efflux is probably coupled to an influx of protons. This is Multidrug resistance protein EbrA (ebrA) from Bacillus subtilis (strain 168).